Reading from the N-terminus, the 662-residue chain is Histidine decarboxylase (662 aa).

Substrate is bound by residues Tyr-81 and His-194. Lys-305 carries the N6-(pyridoxal phosphate)lysine modification.

It belongs to the group II decarboxylase family. Homodimer. The cofactor is pyridoxal 5'-phosphate.

The enzyme catalyses L-histidine + H(+) = histamine + CO2. Its pathway is amine and polyamine biosynthesis; histamine biosynthesis; histamine from L-histidine: step 1/1. Catalyzes the biosynthesis of histamine from histidine. The polypeptide is Histidine decarboxylase (HDC) (Homo sapiens (Human)).